The chain runs to 221 residues: Secreted protein BARF1 (221 aa).

An N-terminal signal peptide occupies residues 1–20 (MARFIAQLLLLASCVAAGQA). 2 consecutive Ig-like domains span residues 21–120 (VTAF…EHLS) and 124–220 (PLTL…GYLS). A glycan (N-linked (GlcNAc...) asparagine; by host) is linked at Asn-95. Cys-146 and Cys-201 form a disulfide bridge.

As to quaternary structure, homohexamer. Interacts with human CSF1. Post-translationally, phosphorylated on serine and threonine by host.

The protein resides in the secreted. Plays diverse functions in immunomodulation and oncogenicity, maybe by acting as a functional receptor for human CSF1. May inhibit interferon secretion from mononuclear cells. Exhibits oncogenic activity in vitro. The protein is Secreted protein BARF1 of Epstein-Barr virus (strain B95-8) (HHV-4).